A 1434-amino-acid polypeptide reads, in one-letter code: DNA-directed RNA polymerase subunit beta' (1434 aa).

The Zn(2+) site is built by cysteine 70, cysteine 72, cysteine 85, and cysteine 88. Positions 460, 462, and 464 each coordinate Mg(2+). Zn(2+)-binding residues include cysteine 840, cysteine 915, cysteine 922, and cysteine 925.

This sequence belongs to the RNA polymerase beta' chain family. In terms of assembly, the RNAP catalytic core consists of 2 alpha, 1 beta, 1 beta' and 1 omega subunit. When a sigma factor is associated with the core the holoenzyme is formed, which can initiate transcription. Mg(2+) serves as cofactor. It depends on Zn(2+) as a cofactor.

It carries out the reaction RNA(n) + a ribonucleoside 5'-triphosphate = RNA(n+1) + diphosphate. In terms of biological role, DNA-dependent RNA polymerase catalyzes the transcription of DNA into RNA using the four ribonucleoside triphosphates as substrates. The polypeptide is DNA-directed RNA polymerase subunit beta' (Aeromonas hydrophila subsp. hydrophila (strain ATCC 7966 / DSM 30187 / BCRC 13018 / CCUG 14551 / JCM 1027 / KCTC 2358 / NCIMB 9240 / NCTC 8049)).